A 223-amino-acid chain; its full sequence is Glutathione S-transferase Z2 (223 aa).

The region spanning 10 to 91 (AKLKLYSYWR…YLDDKYPEPP (82 aa)) is the GST N-terminal domain. Glutathione is bound by residues 20–21 (SS), 20–25 (SSCAHR), glutamine 49, 49–50 (QS), 62–63 (TV), valine 63, 75–76 (DS), glutamine 115, and 119–121 (NMA). The region spanning 96–221 (DYHKRAVNYQ…VPEKQPDTPS (126 aa)) is the GST C-terminal domain.

The protein belongs to the GST superfamily. Zeta family.

It is found in the cytoplasm. It localises to the cytosol. The catalysed reaction is RX + glutathione = an S-substituted glutathione + a halide anion + H(+). Functionally, may be involved in the conjugation of reduced glutathione to a wide number of exogenous and endogenous hydrophobic electrophiles and have a detoxification role against certain herbicides. The protein is Glutathione S-transferase Z2 (GSTZ2) of Arabidopsis thaliana (Mouse-ear cress).